The primary structure comprises 495 residues: IQ domain-containing protein IQM5 (495 aa).

The interval 89-122 is disordered; the sequence is ENRGGEEEDERGSSPKRRNRGNLTALSLPAPTPF. The IQ domain occupies 131–160; that stretch reads LDAAAVTLQKVYKSYRTRRNLADCAVVVEE.

Expressed in roots, rosette and cauline leaves, and at lower levels in stems, flowers and siliques.

It localises to the cytoplasm. The protein resides in the nucleus. May be involved in biotic and abiotic stress responses. This Arabidopsis thaliana (Mouse-ear cress) protein is IQ domain-containing protein IQM5.